Consider the following 668-residue polypeptide: CLK4-associating serine/arginine rich protein (668 aa).

Phosphoserine is present on Ser101. Disordered stretches follow at residues 173 to 232 (AEVE…GMAD) and 252 to 668 (AKAL…HYRH). Residues 182-214 (PEEEESPAEEESNSDEDEVIPDIDVEVDVDELN) are compositionally biased toward acidic residues. Residues 265–283 (RRSRRQRREFREKRLRGRK) show a composition bias toward basic residues. 2 positions are modified to phosphoserine: Ser285 and Ser294. Residues 290-313 (ARRDSPTYDPYKRSPSESSSESRS) show a composition bias toward basic and acidic residues. Thr327 carries the phosphothreonine modification. Residues Ser331 and Ser335 each carry the phosphoserine modification. Low complexity predominate over residues 340–353 (AAAAAAAAASGAAP). A compositionally biased stretch (pro residues) spans 354–365 (GKPPAPPQPGGP). Low complexity predominate over residues 378 to 395 (SSSSASRTSSSRSSSRSS). Residues 396–435 (SRSRRGYYRSGRHARSRSRSWSRSRSRSRRYSRSRSRGRR) show a composition bias toward basic residues. The segment covering 436-446 (HSDGGSRDGHR) has biased composition (basic and acidic residues). The span at 475–486 (RGARGPRHHSSS) shows a compositional bias: basic residues. 2 stretches are compositionally biased toward low complexity: residues 487 to 510 (HSRS…SRSQ) and 518 to 527 (QSHSQSQSHS). Phosphoserine is present on Ser541. The residue at position 567 (Thr567) is a Phosphothreonine. Positions 579 to 641 (ALNRQFKADK…ERQYSRQSRS (63 aa)) form a coiled coil. 2 stretches are compositionally biased toward basic and acidic residues: residues 584 to 611 (FKAD…ELRA) and 619 to 635 (KERE…ERQY). Over residues 636–645 (SRQSRSPSPR) the composition is skewed to low complexity. Residues 653 to 668 (SRRRSRSRSRSPHYRH) are compositionally biased toward basic residues.

This sequence belongs to the splicing factor SR family. In terms of assembly, probably interacts with CLK4. In terms of processing, phosphorylated in vitro by CLK4.

Its subcellular location is the nucleus. Functionally, probably functions as an alternative splicing regulator. May regulate the mRNA splicing of genes such as CLK1. May act by regulating members of the CLK kinase family. This is CLK4-associating serine/arginine rich protein (Clasrp) from Rattus norvegicus (Rat).